Consider the following 306-residue polypeptide: Ribonuclease Z (306 aa).

Residues histidine 63, histidine 65, aspartate 67, histidine 68, histidine 142, aspartate 213, and histidine 271 each coordinate Zn(2+). Aspartate 67 (proton acceptor) is an active-site residue.

It belongs to the RNase Z family. Homodimer. It depends on Zn(2+) as a cofactor.

The enzyme catalyses Endonucleolytic cleavage of RNA, removing extra 3' nucleotides from tRNA precursor, generating 3' termini of tRNAs. A 3'-hydroxy group is left at the tRNA terminus and a 5'-phosphoryl group is left at the trailer molecule.. Functionally, zinc phosphodiesterase, which displays some tRNA 3'-processing endonuclease activity. Probably involved in tRNA maturation, by removing a 3'-trailer from precursor tRNA. The protein is Ribonuclease Z of Oceanobacillus iheyensis (strain DSM 14371 / CIP 107618 / JCM 11309 / KCTC 3954 / HTE831).